Reading from the N-terminus, the 258-residue chain is SMH class II histocompatibility antigen, beta-1 chain (258 aa).

Residues 1–29 (MMVLPVPVAPWTAALTVLLMVLNKSVVQG) form the signal peptide. Residues 30-121 (RTTPENYLFR…LNQRLSQSLI (92 aa)) are beta-1. Topologically, residues 30–225 (RTTPENYLFR…RAQSDSARNK (196 aa)) are extracellular. Disulfide bonds link cysteine 44/cysteine 106 and cysteine 144/cysteine 200. Residues 122–215 (AQPKVHVSPS…SLDRPITVEW (94 aa)) form a beta-2 region. The region spanning 124-212 (PKVHVSPSKG…EHPSLDRPIT (89 aa)) is the Ig-like C1-type domain. A connecting peptide region spans residues 216–225 (RAQSDSARNK). Residue asparagine 224 is glycosylated (N-linked (GlcNAc...) asparagine). A helical membrane pass occupies residues 226 to 246 (TLTGVGGLVLGLIFLAVGLIM). Residues 247-258 (HVRSKKAQRGSR) lie on the Cytoplasmic side of the membrane.

This sequence belongs to the MHC class II family.

It is found in the membrane. The polypeptide is SMH class II histocompatibility antigen, beta-1 chain (Spalax ehrenbergi (Middle East blind mole rat)).